Reading from the N-terminus, the 352-residue chain is UDP-3-O-acylglucosamine N-acyltransferase (352 aa).

The active-site Proton acceptor is histidine 242.

The protein belongs to the transferase hexapeptide repeat family. LpxD subfamily. As to quaternary structure, homotrimer.

It carries out the reaction a UDP-3-O-[(3R)-3-hydroxyacyl]-alpha-D-glucosamine + a (3R)-hydroxyacyl-[ACP] = a UDP-2-N,3-O-bis[(3R)-3-hydroxyacyl]-alpha-D-glucosamine + holo-[ACP] + H(+). It participates in bacterial outer membrane biogenesis; LPS lipid A biosynthesis. Its function is as follows. Catalyzes the N-acylation of UDP-3-O-acylglucosamine using 3-hydroxyacyl-ACP as the acyl donor. Is involved in the biosynthesis of lipid A, a phosphorylated glycolipid that anchors the lipopolysaccharide to the outer membrane of the cell. In Alkalilimnicola ehrlichii (strain ATCC BAA-1101 / DSM 17681 / MLHE-1), this protein is UDP-3-O-acylglucosamine N-acyltransferase.